The sequence spans 39 residues: Fuctinin-3 (39 aa).

Residues 1–39 are disordered; sequence KELNSNHDGADETSEKEQQEAIEHIDEVQNEIDRLNETA.

The protein to human SET/PHAPII protein. As to quaternary structure, oligomer.

It localises to the cytoplasm. Has a role in the physiological regulation of fucosylation processes. The chain is Fuctinin-3 from Rattus norvegicus (Rat).